The chain runs to 526 residues: pH-sensitive chloride channel 2 (526 aa).

Residues 1–18 (MDTLGIFVLISYLGLSSA) form the signal peptide. Residues 19–300 (AGVHLGDLQQ…VLLTREVGYY (282 aa)) are Extracellular-facing. N-linked (GlcNAc...) asparagine glycans are attached at residues Asn33, Asn42, Asn52, Asn192, Asn231, Asn264, Asn271, and Asn283. A helical transmembrane segment spans residues 301–321 (VIDYFLPSIMIVTISWVSFWL). Topologically, residues 322-327 (QADQTP) are cytoplasmic. The helical transmembrane segment at 328-347 (ARTTLGCTTLLSFITLSLSQ) threads the bilayer. Residues 348–360 (ENNLMKVSYVTMS) lie on the Extracellular side of the membrane. Residues 361-381 (EVWFLVCTIFIFGSLVEFAFV) form a helical membrane-spanning segment. The Cytoplasmic segment spans residues 382–505 (NTIWRRNNDL…VSLWIDRKMR (124 aa)). The segment at 463–488 (ISLDEQDETSTSESSDSSKEKPAQTF) is disordered. A helical transmembrane segment spans residues 506–526 (FVFPLSFIVFNALFWTLVYCL).

It belongs to the ligand-gated ion channel (TC 1.A.9) family. In terms of tissue distribution, in third-instar larvae, expressed in the principal cells of the excretory Malpighian tubules (at protein level). Also detected in the enterocytes of the copper cell region and the iron cell region of the larval midgut (at protein level). In the copper cell region expression is confined to the interstitial cells and in the iron cell region it is expressed in the anterior portion (at protein level). Expressed in the Malpighian tubules and the middle midgut of third instar larvae and adults.

It is found in the apical cell membrane. It localises to the cell projection. The protein resides in the microvillus membrane. Its subcellular location is the late endosome membrane. The protein localises to the lysosome membrane. The enzyme catalyses chloride(in) = chloride(out). In terms of biological role, ligand and pH-gated channel that mediates chloride transport primarily in the mid-gut and thereby functions in larval metabolism and fluid homeostasis. Channel opening is triggered by zinc binding or, to a lesser extent, an increase in extracellular pH. Zinc-dependent activity in the mid-gut is required for modulating Tor-dependent metabolic programs that promote larval feeding and systematic growth. It may therefore act as an intestinal zinc sensor that mediates larval growth and metabolism in response to micronutrient availability. Activates Tor signaling via its activity in maintaining lysosome homeostasis in interstitial cells and/or by its role in activating the release of insulin-like peptides in the brain after feeding, via an unknown mechanism. Functions in lysosome homeostasis by regulating chloride transport into enterocyte lysosomes to sustain V-ATPase function which maintains lysosomal acidification and consequently promotes Tor activation at the lysosome membrane. Also appears to play a role in regulating fluid secretion and osmotic homeostasis in Malpighian tubules in response to the pH of extracellular urine. This function is important for proper urine production during diuresis. The protein is pH-sensitive chloride channel 2 of Drosophila melanogaster (Fruit fly).